The primary structure comprises 110 residues: Large ribosomal subunit protein uL22 (110 aa).

Belongs to the universal ribosomal protein uL22 family. Part of the 50S ribosomal subunit.

Functionally, this protein binds specifically to 23S rRNA; its binding is stimulated by other ribosomal proteins, e.g. L4, L17, and L20. It is important during the early stages of 50S assembly. It makes multiple contacts with different domains of the 23S rRNA in the assembled 50S subunit and ribosome. The globular domain of the protein is located near the polypeptide exit tunnel on the outside of the subunit, while an extended beta-hairpin is found that lines the wall of the exit tunnel in the center of the 70S ribosome. In Histophilus somni (strain 2336) (Haemophilus somnus), this protein is Large ribosomal subunit protein uL22.